Here is a 70-residue protein sequence, read N- to C-terminus: Conotoxin Im11.11 (70 aa).

An N-terminal signal peptide occupies residues 1 to 25 (MFRLTSVGCILLVIAFLNLVGLTNA). 4 cysteine pairs are disulfide-bonded: cysteine 26/cysteine 40, cysteine 33/cysteine 45, cysteine 39/cysteine 49, and cysteine 44/cysteine 53. Residue proline 56 is modified to Proline amide. Residues 60-70 (TRLQGFFKHRR) constitute a propeptide that is removed on maturation.

This sequence belongs to the conotoxin I2 superfamily. Expressed by the venom duct.

Its subcellular location is the secreted. Probable neurotoxin. The polypeptide is Conotoxin Im11.11 (Conus imperialis (Imperial cone)).